The chain runs to 346 residues: Thiamine-phosphate synthase (346 aa).

The interval 1-125 is unknown; sequence MSVTPNPDQH…SKISAQIRYE (125 aa). Residues 126–346 form a thiamine-phosphate synthase region; the sequence is IYDLEVIILK…SKELLGKLKK (221 aa). Residues 177 to 181 and Asn209 each bind 4-amino-2-methyl-5-(diphosphooxymethyl)pyrimidine; that span reads QYRCK. Residues Asp210 and Asp229 each coordinate Mg(2+). Ser248 contributes to the 4-amino-2-methyl-5-(diphosphooxymethyl)pyrimidine binding site. 274-276 contributes to the 2-[(2R,5Z)-2-carboxy-4-methylthiazol-5(2H)-ylidene]ethyl phosphate binding site; that stretch reads TKS. Lys277 contributes to the 4-amino-2-methyl-5-(diphosphooxymethyl)pyrimidine binding site. 2-[(2R,5Z)-2-carboxy-4-methylthiazol-5(2H)-ylidene]ethyl phosphate is bound at residue Gly304.

This sequence belongs to the thiamine-phosphate synthase family. Requires Mg(2+) as cofactor.

The enzyme catalyses 2-[(2R,5Z)-2-carboxy-4-methylthiazol-5(2H)-ylidene]ethyl phosphate + 4-amino-2-methyl-5-(diphosphooxymethyl)pyrimidine + 2 H(+) = thiamine phosphate + CO2 + diphosphate. It carries out the reaction 2-(2-carboxy-4-methylthiazol-5-yl)ethyl phosphate + 4-amino-2-methyl-5-(diphosphooxymethyl)pyrimidine + 2 H(+) = thiamine phosphate + CO2 + diphosphate. The catalysed reaction is 4-methyl-5-(2-phosphooxyethyl)-thiazole + 4-amino-2-methyl-5-(diphosphooxymethyl)pyrimidine + H(+) = thiamine phosphate + diphosphate. It functions in the pathway cofactor biosynthesis; thiamine diphosphate biosynthesis; thiamine phosphate from 4-amino-2-methyl-5-diphosphomethylpyrimidine and 4-methyl-5-(2-phosphoethyl)-thiazole: step 1/1. In terms of biological role, condenses 4-methyl-5-(beta-hydroxyethyl)thiazole monophosphate (THZ-P) and 2-methyl-4-amino-5-hydroxymethyl pyrimidine pyrophosphate (HMP-PP) to form thiamine monophosphate (TMP). In Prochlorococcus marinus (strain SARG / CCMP1375 / SS120), this protein is Thiamine-phosphate synthase.